We begin with the raw amino-acid sequence, 281 residues long: 2,3,4,5-tetrahydropyridine-2,6-dicarboxylate N-succinyltransferase (281 aa).

Positions 108 and 145 each coordinate substrate.

This sequence belongs to the transferase hexapeptide repeat family. Homotrimer.

It is found in the cytoplasm. The catalysed reaction is (S)-2,3,4,5-tetrahydrodipicolinate + succinyl-CoA + H2O = (S)-2-succinylamino-6-oxoheptanedioate + CoA. Its pathway is amino-acid biosynthesis; L-lysine biosynthesis via DAP pathway; LL-2,6-diaminopimelate from (S)-tetrahydrodipicolinate (succinylase route): step 1/3. The sequence is that of 2,3,4,5-tetrahydropyridine-2,6-dicarboxylate N-succinyltransferase from Rhodopseudomonas palustris (strain BisB5).